The following is a 109-amino-acid chain: UPF0122 protein Cbei_1174 (109 aa).

Belongs to the UPF0122 family.

Its function is as follows. Might take part in the signal recognition particle (SRP) pathway. This is inferred from the conservation of its genetic proximity to ftsY/ffh. May be a regulatory protein. This is UPF0122 protein Cbei_1174 from Clostridium beijerinckii (strain ATCC 51743 / NCIMB 8052) (Clostridium acetobutylicum).